Here is a 354-residue protein sequence, read N- to C-terminus: Biotin synthase (354 aa).

The Radical SAM core domain occupies 64–282 (GDVELATLLS…IAVARITMPR (219 aa)). [4Fe-4S] cluster-binding residues include Cys-79, Cys-83, and Cys-86. [2Fe-2S] cluster is bound by residues Cys-123, Cys-154, Cys-214, and Arg-286.

Belongs to the radical SAM superfamily. Biotin synthase family. Homodimer. Requires [4Fe-4S] cluster as cofactor. It depends on [2Fe-2S] cluster as a cofactor.

It catalyses the reaction (4R,5S)-dethiobiotin + (sulfur carrier)-SH + 2 reduced [2Fe-2S]-[ferredoxin] + 2 S-adenosyl-L-methionine = (sulfur carrier)-H + biotin + 2 5'-deoxyadenosine + 2 L-methionine + 2 oxidized [2Fe-2S]-[ferredoxin]. The protein operates within cofactor biosynthesis; biotin biosynthesis; biotin from 7,8-diaminononanoate: step 2/2. Catalyzes the conversion of dethiobiotin (DTB) to biotin by the insertion of a sulfur atom into dethiobiotin via a radical-based mechanism. The protein is Biotin synthase of Paracidovorax citrulli (strain AAC00-1) (Acidovorax citrulli).